Consider the following 250-residue polypeptide: Probable chemoreceptor glutamine deamidase CheD (250 aa).

The protein belongs to the CheD family.

The enzyme catalyses L-glutaminyl-[protein] + H2O = L-glutamyl-[protein] + NH4(+). Probably deamidates glutamine residues to glutamate on methyl-accepting chemotaxis receptors (MCPs), playing an important role in chemotaxis. In Paraburkholderia xenovorans (strain LB400), this protein is Probable chemoreceptor glutamine deamidase CheD.